Reading from the N-terminus, the 131-residue chain is Bacteriohemerythrin (131 aa).

Histidine 22, histidine 58, glutamate 62, histidine 77, histidine 81, histidine 117, and aspartate 122 together coordinate Fe cation.

This sequence belongs to the hemerythrin family. Monomer.

Its function is as follows. Oxygen-binding protein. May be involved in a storage mechanism or for delivery to oxygen-requiring enzymes. The oxygen-binding site contains two iron atoms. The chain is Bacteriohemerythrin from Methylococcus capsulatus (strain ATCC 33009 / NCIMB 11132 / Bath).